A 1304-amino-acid chain; its full sequence is MQLKIMPKKKRLSAGRVPLILFLCQMISALEVPLDPKLLEDLVQPPTITQQSPKDYIIDPRENIVIQCEAKGKPPPSFSWTRNGTHFDIDKDPLVTMKPGTGTLIINIMSEGKAETYEGVYQCTARNERGAAVSNNIVVRPSRSPLWTKEKLEPITLQSGQSLVLPCRPPIGLPPPIIFWMDNSFQRLPQSERVSQGLNGDLYFSNVLPEDTREDYICYARFNHTQTIQQKQPISVKVISVDELNDTIAANLSDTEFYGAKSSRERPPTFLTPEGNASNKEELRGNVLSLECIAEGLPTPIIYWAKEDGMLPKNRTVYKNFEKTLQIIHVSEADSGNYQCIAKNALGAIHHTISVRVKAAPYWITAPQNLVLSPGEDGTLICRANGNPKPRISWLTNGVPIEIAPDDPSRKIDGDTIIFSNVQERSSAVYQCNASNEYGYLLANAFVNVLAEPPRILTPANTLYQVIANRPALLDCAFFGSPLPTIEWFKGAKGSALHEDIYVLHENGTLEIPVAQKDSTGTYTCVARNKLGMAKNEVHLEIKDPTWIVKQPEYAVVQRGSMVSFECKVKHDHTLSLTVLWLKDNRELPSDERFTVDKDHLVVADVSDDDSGTYTCVANTTLDSVSASAVLSVVAPTPTPAPVYDVPNPPFDLELTDQLDKSVQLSWTPGDDNNSPITKFIIEYEDAMHKPGLWHHQTEVSGTQTTAQLKLSPYVNYSFRVMAVNSIGKSLPSEASEQYLTKASEPDKNPTAVEGLGSEPDNLVITWKPLNGFESNGPGLQYKVSWRQKDGDDEWTSVVVANVSKYIVSGTPTFVPYLIKVQALNDMGFAPEPAVVMGHSGEDLPMVAPGNVRVNVVNSTLAEVHWDPVPLKSIRGHLQGYRIYYWKTQSSSKRNRRHIEKKILTFQGSKTHGMLPGLEPFSHYTLNVRVVNGKGEGPASPDRVFNTPEGVPSAPSSLKIVNPTLDSLTLEWDPPSHPNGILTEYTLKYQPINSTHELGPLVDLKIPANKTRWTLKNLNFSTRYKFYFYAQTSAGSGSQITEEAVTTVDEAGILPPDVGAGKVQAVNPRISNLTAAAAETYANISWEYEGPEHVNFYVEYGVAGSKEEWRKEIVNGSRSFFGLKGLMPGTAYKVRVGAVGDSGFVSSEDVFETGPAMASRQVDIATQGWFIGLMCAVALLILILLIVCFIRRNKGGKYPVKEKEDAHADPEIQPMKEDDGTFGEYSDAEDHKPLKKGSRTPSDRTVKKEDSDDSLVDYGEGVNGQFNEDGSFIGQYSGKKEKEPAEGNESSEAPSPVNAMNSFV.

The signal sequence occupies residues 1-24 (MQLKIMPKKKRLSAGRVPLILFLC). Residues 25-1167 (QMISALEVPL…ASRQVDIATQ (1143 aa)) lie on the Extracellular side of the membrane. Ig-like domains follow at residues 46–134 (PTIT…AAVS) and 141–235 (PSRS…QPIS). Cystine bridges form between cysteine 68–cysteine 123 and cysteine 167–cysteine 218. The N-linked (GlcNAc...) asparagine glycan is linked to asparagine 83. 5 N-linked (GlcNAc...) asparagine glycosylation sites follow: asparagine 223, asparagine 245, asparagine 251, asparagine 276, and asparagine 314. Ig-like domains are found at residues 267-356 (PPTF…ISVR), 361-448 (PYWI…AFVN), 454-541 (PRIL…VHLE), and 545-632 (PTWI…AVLS). 2 cysteine pairs are disulfide-bonded: cysteine 292–cysteine 340 and cysteine 382–cysteine 432. N-linked (GlcNAc...) asparagine glycosylation is found at asparagine 433 and asparagine 507. 2 cysteine pairs are disulfide-bonded: cysteine 476-cysteine 525 and cysteine 567-cysteine 616. 3 N-linked (GlcNAc...) asparagine glycosylation sites follow: asparagine 619, asparagine 716, and asparagine 802. Fibronectin type-III domains are found at residues 649–744 (PPFD…TKAS), 746–843 (PDKN…SGED), 848–950 (APGN…TPEG), 954–1051 (APSS…VDEA), and 1064–1156 (QAVN…TGPA). Asparagine 858 is a glycosylation site (N-linked (GlcNAc...) (complex) asparagine). Asparagine 993, asparagine 1009, asparagine 1019, asparagine 1072, asparagine 1083, and asparagine 1115 each carry an N-linked (GlcNAc...) asparagine glycan. The helical transmembrane segment at 1168-1190 (GWFIGLMCAVALLILILLIVCFI) threads the bilayer. Over 1191-1304 (RRNKGGKYPV…SPVNAMNSFV (114 aa)) the chain is Cytoplasmic. The span at 1199–1219 (PVKEKEDAHADPEIQPMKEDD) shows a compositional bias: basic and acidic residues. The segment at 1199 to 1304 (PVKEKEDAHA…SPVNAMNSFV (106 aa)) is disordered. Threonine 1221 is modified (phosphothreonine). Tyrosine 1225 is modified (phosphotyrosine). Serine 1226 is subject to Phosphoserine. Positions 1241-1250 (PSDRTVKKED) are enriched in basic and acidic residues. Phosphoserine is present on residues serine 1251, serine 1254, serine 1271, serine 1290, serine 1291, and serine 1295. Over residues 1288-1304 (NESSEAPSPVNAMNSFV) the composition is skewed to polar residues.

It belongs to the immunoglobulin superfamily. L1/neurofascin/NgCAM family. As to quaternary structure, constituent of a NFASC/NRCAM/ankyrin-G complex. Detected in a complex with CNTN1 and PTPRB. Interacts with GLDN/gliomedin. Interacts with MYOC. In terms of tissue distribution, detected in all the examined tissues. In the brain it was detected in the amygdala, caudate nucleus, corpus callosum, hippocampus, hypothalamus, substantia nigra, subthalamic nucleus and thalamus.

Its subcellular location is the cell membrane. It is found in the cell projection. The protein resides in the axon. It localises to the secreted. Functionally, cell adhesion protein that is required for normal responses to cell-cell contacts in brain and in the peripheral nervous system. Plays a role in neurite outgrowth in response to contactin binding. Plays a role in mediating cell-cell contacts between Schwann cells and axons. Plays a role in the formation and maintenance of the nodes of Ranvier on myelinated axons. Nodes of Ranvier contain clustered sodium channels that are crucial for the saltatory propagation of action potentials along myelinated axons. During development, nodes of Ranvier are formed by the fusion of two heminodes. Required for normal clustering of sodium channels at heminodes; not required for the formation of mature nodes with normal sodium channel clusters. Required, together with GLDN, for maintaining NFASC and sodium channel clusters at mature nodes of Ranvier. In Homo sapiens (Human), this protein is Neuronal cell adhesion molecule (NRCAM).